The chain runs to 95 residues: Co-chaperonin GroES (95 aa).

It belongs to the GroES chaperonin family. As to quaternary structure, heptamer of 7 subunits arranged in a ring. Interacts with the chaperonin GroEL.

Its subcellular location is the cytoplasm. Together with the chaperonin GroEL, plays an essential role in assisting protein folding. The GroEL-GroES system forms a nano-cage that allows encapsulation of the non-native substrate proteins and provides a physical environment optimized to promote and accelerate protein folding. GroES binds to the apical surface of the GroEL ring, thereby capping the opening of the GroEL channel. The chain is Co-chaperonin GroES from Desulfatibacillum aliphaticivorans.